We begin with the raw amino-acid sequence, 814 residues long: Rho GTPase-activating protein 44 (814 aa).

A BAR domain is found at 14–249 (QTVGRAEKTE…IKAQQEAWVE (236 aa)). One can recognise a Rho-GAP domain in the interval 255–445 (KPLEEHLMIS…PIIQHADWFF (191 aa)). Disordered regions lie at residues 467–493 (ANYSSMPSPDMDPADRRQPEQARRPLS), 528–769 (RGSS…MSTD), and 784–814 (STLRLSPLEHARRHSATDKRDSEEESESTAL). The span at 479–489 (PADRRQPEQAR) shows a compositional bias: basic and acidic residues. Ser493 is subject to Phosphoserine. Low complexity-rich tracts occupy residues 567–581 (SPATPAPALSPSGAS), 598–612 (SPGSGQKGSPGSIQG), 622–637 (PQPAASPSQLPADQSP), 684–704 (SPYGLSYPPGYSMASGQLSPA), and 741–752 (SVSLSASSPQST). An interaction with BST2 region spans residues 727 to 814 (KPRQRPTLPP…SEEESESTAL (88 aa)). Residues 790 to 805 (PLEHARRHSATDKRDS) show a composition bias toward basic and acidic residues. Ser805 is modified (phosphoserine). The PDZ-binding signature appears at 811 to 814 (STAL).

As to quaternary structure, interacts with BST2 (via cytoplasmic domain). Interacts (probably via PDZ-binding motif) with SHANK3 (via PDZ domain); the interaction takes place in dendritic spines and promotes GRIA1 exocytosis. In terms of tissue distribution, specifically expressed in brain (at protein level). Detected in olfactory bulb, cortex, hippocampus, diencephalon and cerebellum (at protein level). Expressed in hippocampal neurons (at protein level).

The protein localises to the cell projection. The protein resides in the dendritic spine. It localises to the recycling endosome. Its subcellular location is the presynapse. It is found in the dendrite. Functionally, GTPase-activating protein (GAP) that stimulates the GTPase activity of Rho-type GTPases. Thereby, controls Rho-type GTPases cycling between their active GTP-bound and inactive GDP-bound states. Acts as a GAP at least for CDC42 and RAC1. In neurons, is involved in dendritic spine formation and synaptic plasticity in a specific RAC1-GAP activity. Limits the initiation of exploratory dendritic filopodia. Recruited to actin-patches that seed filopodia, binds specifically to plasma membrane sections that are deformed inward by acto-myosin mediated contractile forces. Acts through GAP activity on RAC1 to reduce actin polymerization necessary for filopodia formation. In association with SHANK3, promotes GRIA1 exocytosis from recycling endosomes and spine morphological changes associated to long-term potentiation. The polypeptide is Rho GTPase-activating protein 44 (Mus musculus (Mouse)).